We begin with the raw amino-acid sequence, 1486 residues long: Chromosome partition protein MukB (1486 aa).

An ATP-binding site is contributed by 34 to 41; that stretch reads GGNGAGKS. Coiled coils occupy residues 326-418, 444-480, and 509-603; these read LEAD…QYNQ, LETFQAKELEATEKMLSLEQKMSMAQTAHSQFEQAYQ, and RHLA…RAPV. The flexible hinge stretch occupies residues 666–783; sequence PGGSEDQRLN…EVPLFGRAAR (118 aa). Coiled-coil stretches lie at residues 835 to 923, 977 to 1115, and 1209 to 1266; these read EAEI…AKLE, EMLS…TAKA, and VEAI…QNVS.

This sequence belongs to the SMC family. MukB subfamily. In terms of assembly, homodimerization via its hinge domain. Binds to DNA via its C-terminal region. Interacts, and probably forms a ternary complex, with MukE and MukF via its C-terminal region. The complex formation is stimulated by calcium or magnesium. Interacts with tubulin-related protein FtsZ.

The protein resides in the cytoplasm. Its subcellular location is the nucleoid. Plays a central role in chromosome condensation, segregation and cell cycle progression. Functions as a homodimer, which is essential for chromosome partition. Involved in negative DNA supercoiling in vivo, and by this means organize and compact chromosomes. May achieve or facilitate chromosome segregation by condensation DNA from both sides of a centrally located replisome during cell division. The protein is Chromosome partition protein MukB of Escherichia coli O6:K15:H31 (strain 536 / UPEC).